The chain runs to 332 residues: MGSSGSMVKPISGFLTALIQYPVPVVESRADIDKQIKQIIKTIHSTKAGYPGLELIVFPEYSTQGLNTKKWTTEEFLCTVPGPETDLFAEACKESEVYGVFSIMERNPDGGEPYNTAIIIDPQGEMILKYRKLNPWVPVEPWKAGDLGLPVCDGPGGSKLAVCICHDGMFPEVAREAAYKGANVLIRISGYSTQVSEQWMLTNRSNAWQNLMYTLSVNLAGYDGVFYYFGEGQVCNFDGTTLVQGHRNPWEIVTAEVYPELADQARLGWGLENNIYNLGSRGYVATPGGVKENPYTFVKDLAEGKYKVPWEDEIKVKDGTIYGYPVKKTIHS.

The 246-residue stretch at 14-259 (FLTALIQYPV…WEIVTAEVYP (246 aa)) folds into the CN hydrolase domain. The active-site Proton acceptor is the Glu60. Lys132 (proton donor) is an active-site residue. Cys165 serves as the catalytic Nucleophile.

It belongs to the carbon-nitrogen hydrolase superfamily. Aliphatic amidase family.

It carries out the reaction formamide + H2O = formate + NH4(+). In terms of biological role, is an aliphatic amidase with a restricted substrate specificity, as it only hydrolyzes formamide. The protein is Formamidase of Bacillus cereus (strain ZK / E33L).